We begin with the raw amino-acid sequence, 1106 residues long: Carbamoyl phosphate synthase large chain (1106 aa).

The tract at residues 1-402 (MPKREDLKSV…ALQKALRSLE (402 aa)) is carboxyphosphate synthetic domain. ATP contacts are provided by arginine 129, arginine 169, glycine 175, glycine 176, glutamate 208, isoleucine 210, glutamate 215, glycine 241, valine 242, histidine 243, glutamine 285, and glutamate 299. An ATP-grasp 1 domain is found at 133 to 328 (KGVVERCGAE…IAKIATKLSL (196 aa)). Residues glutamine 285, glutamate 299, and asparagine 301 each coordinate Mg(2+). Mn(2+)-binding residues include glutamine 285, glutamate 299, and asparagine 301. The tract at residues 403 to 546 (QKGSQLDFGS…YHYSSYDQED (144 aa)) is oligomerization domain. Residues 547–956 (EIALHEKPSV…AFAKSQAAAN (410 aa)) are carbamoyl phosphate synthetic domain. The 192-residue stretch at 677 to 868 (ARVLDIAGLI…LAKAAALIGT (192 aa)) folds into the ATP-grasp 2 domain. ATP is bound by residues arginine 713, arginine 752, leucine 754, glutamate 759, glycine 784, isoleucine 785, histidine 786, serine 787, glutamine 827, and glutamate 839. Glutamine 827, glutamate 839, and asparagine 841 together coordinate Mg(2+). Mn(2+)-binding residues include glutamine 827, glutamate 839, and asparagine 841. The MGS-like domain maps to 957 to 1106 (NALPTEGKVF…EALLEAAANV (150 aa)). An allosteric domain region spans residues 957 to 1106 (NALPTEGKVF…EALLEAAANV (150 aa)).

It belongs to the CarB family. In terms of assembly, composed of two chains; the small (or glutamine) chain promotes the hydrolysis of glutamine to ammonia, which is used by the large (or ammonia) chain to synthesize carbamoyl phosphate. Tetramer of heterodimers (alpha,beta)4. Mg(2+) is required as a cofactor. The cofactor is Mn(2+).

It carries out the reaction hydrogencarbonate + L-glutamine + 2 ATP + H2O = carbamoyl phosphate + L-glutamate + 2 ADP + phosphate + 2 H(+). The catalysed reaction is hydrogencarbonate + NH4(+) + 2 ATP = carbamoyl phosphate + 2 ADP + phosphate + 2 H(+). The protein operates within amino-acid biosynthesis; L-arginine biosynthesis; carbamoyl phosphate from bicarbonate: step 1/1. It participates in pyrimidine metabolism; UMP biosynthesis via de novo pathway; (S)-dihydroorotate from bicarbonate: step 1/3. Its function is as follows. Large subunit of the glutamine-dependent carbamoyl phosphate synthetase (CPSase). CPSase catalyzes the formation of carbamoyl phosphate from the ammonia moiety of glutamine, carbonate, and phosphate donated by ATP, constituting the first step of 2 biosynthetic pathways, one leading to arginine and/or urea and the other to pyrimidine nucleotides. The large subunit (synthetase) binds the substrates ammonia (free or transferred from glutamine from the small subunit), hydrogencarbonate and ATP and carries out an ATP-coupled ligase reaction, activating hydrogencarbonate by forming carboxy phosphate which reacts with ammonia to form carbamoyl phosphate. This is Carbamoyl phosphate synthase large chain from Renibacterium salmoninarum (strain ATCC 33209 / DSM 20767 / JCM 11484 / NBRC 15589 / NCIMB 2235).